Consider the following 105-residue polypeptide: Mitomycin resistance protein McrB (105 aa).

Its function is as follows. Involved in mitomycin resistance. May operate with McrA or may be a type of transcriptional activator protein. The polypeptide is Mitomycin resistance protein McrB (mcrB) (Streptomyces lavendulae).